A 649-amino-acid chain; its full sequence is Putative calpain-like cysteine protease A (649 aa).

Residues 1–3 (MLT) constitute a propeptide that is removed on maturation. 2 disordered regions span residues 1–22 (MLTTESPTTTTTTTTTTTSSPS) and 124–193 (PLSN…SMPA). Residues 15–123 (TTTTSSPSSD…LHANGEAKWY (109 aa)) enclose the C2 domain. Residues 140-149 (ITNSNNKDNN) are compositionally biased toward low complexity. Residues 159–172 (AQEKGDEDQHHSAD) show a composition bias toward basic and acidic residues. 2 domain III regions span residues 458-489 (EGTYIVIPSTYDHGIEGAFHLTLFTDDKNATF) and 498-633 (EVEQ…ISLD).

It belongs to the peptidase C2 family. Monomer. Post-translationally, undergoes autolytic cleavage between Pro-192 and Ala-193.

Its subcellular location is the cytoplasm. The protein resides in the cytosol. Functionally, has a weak caseinolytic activity. The sequence is that of Putative calpain-like cysteine protease A (cplA) from Dictyostelium discoideum (Social amoeba).